The sequence spans 503 residues: NAD(P)H-quinone oxidoreductase chain 4, chloroplastic (503 aa).

Transmembrane regions (helical) follow at residues F4–L24, I37–L57, I87–V107, L134–M154, F167–L187, A208–I228, H242–V262, A272–A292, I305–D325, G330–G350, L386–T406, I416–M436, and L462–V482.

It belongs to the complex I subunit 4 family.

It is found in the plastid. The protein localises to the chloroplast thylakoid membrane. It catalyses the reaction a plastoquinone + NADH + (n+1) H(+)(in) = a plastoquinol + NAD(+) + n H(+)(out). It carries out the reaction a plastoquinone + NADPH + (n+1) H(+)(in) = a plastoquinol + NADP(+) + n H(+)(out). The sequence is that of NAD(P)H-quinone oxidoreductase chain 4, chloroplastic from Drimys granadensis.